The primary structure comprises 187 residues: uncharacterized protein (187 aa).

Positions 127–172 (KQPQVTLTQLQEELDEAKTRLALKEKELLEALSEISKLRLQLSNQL) form a coiled coil.

This is an uncharacterized protein from Tomato torrado virus (isolate Solanum lycopersicum/Spain/PRIToTV0301/-) (ToTV).